A 223-amino-acid polypeptide reads, in one-letter code: MSAQLLILSHMVLLQLIVAQLGPKIGKQFLKPKQCEITNQTVYDFQVQMLNGAQKSLAEYRNKVLLIVNVATYCAYTMQYRDFNPILESNSNGTLNILGFPCNQFYLQEPAENHELLSGLKYVRPGHGWEPHKNMHIFGKLEVNGENDHPLYKFLKERCPPTVPVIGKRHQLIYDPIGTNDVIWNFEKFLVDKKGRPRYRFHPENWVQGTAVKPYIDELEREI.

The N-terminal stretch at 1–19 is a signal peptide; it reads MSAQLLILSHMVLLQLIVA. An N-linked (GlcNAc...) asparagine glycan is attached at Asn39. Residue Cys74 is part of the active site. A glycan (N-linked (GlcNAc...) asparagine) is linked at Asn92.

This sequence belongs to the glutathione peroxidase family. As to quaternary structure, homotetramer.

The protein resides in the secreted. It catalyses the reaction 2 glutathione + H2O2 = glutathione disulfide + 2 H2O. In terms of biological role, could inhibit the oxidative burst of leukocytes and neutralize the secondary products of lipid peroxidation, thus providing the resistance of these parasites to immune effector mechanisms and their persistence in the mammalian host. It may also be involved in the formation of cross-linking residues such as dityrosine, trityrosine and isotrityrosine identified in cuticular collagen. Highly cross-linked external cortex may also serve to protect the parasite from immune attack. This Brugia malayi (Filarial nematode worm) protein is Cuticular glutathione peroxidase.